Here is a 154-residue protein sequence, read N- to C-terminus: Putative pre-16S rRNA nuclease (154 aa).

Belongs to the YqgF nuclease family.

It localises to the cytoplasm. Its function is as follows. Could be a nuclease involved in processing of the 5'-end of pre-16S rRNA. The protein is Putative pre-16S rRNA nuclease of Rickettsia akari (strain Hartford).